The chain runs to 418 residues: Hepatic and glial cell adhesion molecule (418 aa).

The N-terminal stretch at 1–33 is a signal peptide; sequence MKREREAPSRAFSALRLAPFVYLLLIQTEPLEG. One can recognise an Ig-like V-type domain in the interval 34 to 141; it reads VNITSPVRLI…TGEKTINLTV (108 aa). The Extracellular segment spans residues 34 to 240; it reads VNITSPVRLI…VKITVYRRSS (207 aa). N-linked (GlcNAc...) asparagine glycans are attached at residues Asn35, Asn138, Asn167, and Asn189. One can recognise an Ig-like C2-type domain in the interval 148 to 234; the sequence is PQVLVASTTV…QGRSPPVKIT (87 aa). Cys168 and Cys217 are oxidised to a cystine. A helical membrane pass occupies residues 241–261; it reads LYIILSTGGIFLLVTLVTVCA. The Cytoplasmic portion of the chain corresponds to 262-418; that stretch reads CWKPSKKSGK…DEAGPVEISA (157 aa). The disordered stretch occupies residues 271 to 418; the sequence is KKRKLEKQNS…DEAGPVEISA (148 aa). Residue Ser280 is modified to Phosphoserine. Residues 287-308 are compositionally biased toward basic and acidic residues; the sequence is SDDRLKPEADTLPRSGEQERKN. 2 positions are modified to phosphoserine: Ser352 and Ser379. Residues 385-400 are compositionally biased toward low complexity; it reads GSPGRSRSASRTLRTA.

As to quaternary structure, homodimer. Dimer formation occurs predominantly through cis interactions on the cell surface. Part of a complex containing MLC1, TRPV4, AQP4 and ATP1B1. Interacts with CLCN2. N-glycosylated.

Its subcellular location is the cytoplasm. It localises to the cell membrane. In terms of biological role, involved in regulating cell motility and cell-matrix interactions. May inhibit cell growth through suppression of cell proliferation. In glia, associates and targets CLCN2 at astrocytic processes and myelinated fiber tracts where it may regulate transcellular chloride flux involved in neuron excitability. This is Hepatic and glial cell adhesion molecule from Bos taurus (Bovine).